Reading from the N-terminus, the 63-residue chain is QHWSYGLRPGGKRNAERLGDSFQEMDKEVDQLAEPQHLECTVHWPRSPLRDLRGVLESLIEEE.

Position 1 is a pyrrolidone carboxylic acid (Gln-1). Residue Gly-10 is modified to Glycine amide.

This sequence belongs to the GnRH family. Post-translationally, the precursor is cleaved by ACE, which removes the Gly-Lys-Arg peptide at the C-terminus, leading to mature hormone. The mature form of Gonadoliberin-1 is also cleaved and degraded by ACE.

It is found in the secreted. Stimulates the secretion of gonadotropins; it stimulates the secretion of both luteinizing and follicle-stimulating hormones. In Mesocricetus auratus (Golden hamster), this protein is Progonadoliberin-1 (GNRH1).